The following is a 377-amino-acid chain: Transmembrane protein 237A (377 aa).

3 stretches are compositionally biased toward basic and acidic residues: residues 1–11, 43–64, and 74–87; these read MCVTSRADKMP, LESR…DNPP, and HTFE…DHPN. The disordered stretch occupies residues 1–124; sequence MCVTSRADKM…NQSHNELGVE (124 aa). Transmembrane regions (helical) follow at residues 198-218, 239-259, 273-293, and 326-346; these read IIGL…IIVV, LAYP…VSAF, GFLT…ALIL, and PWIV…VFVA.

It belongs to the TMEM237 family.

It localises to the membrane. Its subcellular location is the cell projection. It is found in the cilium. Component of the transition zone in primary cilia. Required for ciliogenesis. This is Transmembrane protein 237A (tmem237a) from Danio rerio (Zebrafish).